Here is a 501-residue protein sequence, read N- to C-terminus: MNTLNETAAADESLDTAFLSSPQCAAPQRFQKIKRKSRASPETERKKPKSTIGKQGENPSATEPRYGGNSNRFGLLAHLTADKQVGNEIGDLYDQPSTSHQAAIAAAKRDAASAGTTSSAKRAQSKPPPIVMEGVDDVYLMMQSIENIVDLEKIEARASMSGVLRLYAADANTFRTIVNWLEIEEYEFHCYQLKEDRPYRVCVKGLHHSTLHHQIKDELEKIGHKVLDIHTPLRRNEPGTSKASPVNMFFLNIAAAANNKEILAVKALCHMRVVIEPLRKRNAIVQCHRCQQIGHTAKYCRKAHICVKCAGEHPAKDCTRPRIELCTCYNCGGQHPANYKGCSKLQAFLQRSRPRSGVAGRTEVSDRPTPRGLAGGKEIPSSRGGISYADVARGSIHHKQPMSLTHQQQKQKQQPYDGSPSRQRSRSRTRASRGTLQRSTDASSSIEAILQTLNENINSLRSIQEKQMELMMMMMKQQQQQSHQQGQIINLLTALQARQAP.

Disordered regions lie at residues 20-71 (SSPQ…GNSN) and 105-128 (AAAK…SKPP). The CCHC-type zinc-finger motif lies at 285-302 (VQCHRCQQIGHTAKYCRK). 2 disordered regions span residues 353–385 (RPRS…SRGG) and 400–443 (QPMS…TDAS). Residues 407–422 (QQQKQKQQPYDGSPSR) are compositionally biased toward low complexity. Residues 434–443 (GTLQRSTDAS) show a composition bias toward polar residues.

The protein localises to the virion. Functionally, strongly basic protein that binds directly to retroviral RNA and may be involved in its packaging and in the reverse transcription process. The protein is Nucleic-acid-binding protein from transposon X-element of Drosophila melanogaster (Fruit fly).